We begin with the raw amino-acid sequence, 287 residues long: Lycopene elongase/hydratase (287 aa).

7 helical membrane passes run I15–I35, W37–I57, T87–G107, F137–I157, M166–V186, L218–I238, and V265–H285.

The protein belongs to the UbiA prenyltransferase family.

The protein resides in the cell membrane. The enzyme catalyses all-trans-lycopene + dimethylallyl diphosphate + A + H2O = nonaflavuxanthin + AH2 + diphosphate. The catalysed reaction is nonaflavuxanthin + dimethylallyl diphosphate + A + H2O = flavuxanthin + AH2 + diphosphate. It participates in carotenoid biosynthesis. Its function is as follows. Catalyzes the elongation of the C(40) carotenoid all-trans-lycopene to the acyclic C(50) carotenoid flavuxanthin during decaprenoxanthin biosynthesis. Acts as a bifunctional enzyme that catalyzes the elongation of lycopene by attaching a C(5) isoprene unit at C-2, as well as the hydroxylation of the new isoprene unit. The enzyme acts at both ends of the substrate, forming the C(50) carotenoid flavuxanthin via the C(45) intermediate nonaflavuxanthin. In Corynebacterium glutamicum (strain ATCC 13032 / DSM 20300 / JCM 1318 / BCRC 11384 / CCUG 27702 / LMG 3730 / NBRC 12168 / NCIMB 10025 / NRRL B-2784 / 534), this protein is Lycopene elongase/hydratase.